The following is a 67-amino-acid chain: Probable tautomerase bsl7456 (67 aa).

Proline 2 (proton acceptor; via imino nitrogen) is an active-site residue.

The protein belongs to the 4-oxalocrotonate tautomerase family.

The polypeptide is Probable tautomerase bsl7456 (Bradyrhizobium diazoefficiens (strain JCM 10833 / BCRC 13528 / IAM 13628 / NBRC 14792 / USDA 110)).